Here is a 94-residue protein sequence, read N- to C-terminus: Exodeoxyribonuclease 7 small subunit (94 aa).

This sequence belongs to the XseB family. In terms of assembly, heterooligomer composed of large and small subunits.

Its subcellular location is the cytoplasm. The enzyme catalyses Exonucleolytic cleavage in either 5'- to 3'- or 3'- to 5'-direction to yield nucleoside 5'-phosphates.. Bidirectionally degrades single-stranded DNA into large acid-insoluble oligonucleotides, which are then degraded further into small acid-soluble oligonucleotides. The chain is Exodeoxyribonuclease 7 small subunit from Ralstonia nicotianae (strain ATCC BAA-1114 / GMI1000) (Ralstonia solanacearum).